Consider the following 142-residue polypeptide: MTSQTLLAFDFGTKRIGAAVGQSITCTANILNTIPAKEGIPNWDTIEALLKEWQPDTVIVGLPLNMDGTENELCRRAKKFGNRIHGRFRVPVEMFDERLTTREAKELAWEEGHKGNYANDPVDSIAARLILESWWRQHPPTP.

This sequence belongs to the YqgF nuclease family.

The protein localises to the cytoplasm. In terms of biological role, could be a nuclease involved in processing of the 5'-end of pre-16S rRNA. The polypeptide is Putative pre-16S rRNA nuclease (Saccharophagus degradans (strain 2-40 / ATCC 43961 / DSM 17024)).